We begin with the raw amino-acid sequence, 269 residues long: Cytochrome c oxidase subunit 3 (269 aa).

7 helical membrane-spanning segments follow: residues 24–44 (FYNS…MHGF), 46–66 (NMYI…TLWF), 90–110 (GVGL…WTFF), 132–152 (IDPF…GVTV), 167–187 (ALYG…FQGI), 207–227 (FSTG…SVGL), and 247–267 (ILYW…IYFW).

Belongs to the cytochrome c oxidase subunit 3 family. Component of the cytochrome c oxidase (complex IV, CIV), a multisubunit enzyme composed of a catalytic core of 3 subunits and several supernumerary subunits. The complex exists as a monomer or a dimer and forms supercomplexes (SCs) in the inner mitochondrial membrane with ubiquinol-cytochrome c oxidoreductase (cytochrome b-c1 complex, complex III, CIII).

The protein resides in the mitochondrion inner membrane. It carries out the reaction 4 Fe(II)-[cytochrome c] + O2 + 8 H(+)(in) = 4 Fe(III)-[cytochrome c] + 2 H2O + 4 H(+)(out). In terms of biological role, component of the cytochrome c oxidase, the last enzyme in the mitochondrial electron transport chain which drives oxidative phosphorylation. The respiratory chain contains 3 multisubunit complexes succinate dehydrogenase (complex II, CII), ubiquinol-cytochrome c oxidoreductase (cytochrome b-c1 complex, complex III, CIII) and cytochrome c oxidase (complex IV, CIV), that cooperate to transfer electrons derived from NADH and succinate to molecular oxygen, creating an electrochemical gradient over the inner membrane that drives transmembrane transport and the ATP synthase. Cytochrome c oxidase is the component of the respiratory chain that catalyzes the reduction of oxygen to water. Electrons originating from reduced cytochrome c in the intermembrane space (IMS) are transferred via the dinuclear copper A center (CU(A)) of subunit 2 and heme A of subunit 1 to the active site in subunit 1, a binuclear center (BNC) formed by heme A3 and copper B (CU(B)). The BNC reduces molecular oxygen to 2 water molecules using 4 electrons from cytochrome c in the IMS and 4 protons from the mitochondrial matrix. In Trichophyton rubrum (Athlete's foot fungus), this protein is Cytochrome c oxidase subunit 3 (COXIII).